We begin with the raw amino-acid sequence, 274 residues long: Thiamine kinase (274 aa).

The protein belongs to the thiamine kinase family.

It catalyses the reaction thiamine + ATP = thiamine phosphate + ADP + H(+). It functions in the pathway cofactor biosynthesis; thiamine diphosphate biosynthesis; thiamine phosphate from thiamine: step 1/1. Catalyzes the ATP-dependent phosphorylation of thiamine to thiamine phosphate. Is involved in thiamine salvage. The polypeptide is Thiamine kinase (Shigella sonnei (strain Ss046)).